Reading from the N-terminus, the 154-residue chain is Transcriptional repressor NrdR (154 aa).

A zinc finger spans residues 3-34; sequence CPFCRHPDSRVVDSRETDEGQAIRRRRSCPEC. Residues 46-136 form the ATP-cone domain; sequence LAVVKRSGVT…VYRSFSSAED (91 aa).

Belongs to the NrdR family. Requires Zn(2+) as cofactor.

Its function is as follows. Negatively regulates transcription of bacterial ribonucleotide reductase nrd genes and operons by binding to NrdR-boxes. The protein is Transcriptional repressor NrdR of Mycolicibacterium gilvum (strain PYR-GCK) (Mycobacterium gilvum (strain PYR-GCK)).